The following is a 320-amino-acid chain: Lipoyl synthase (320 aa).

Positions 67, 72, 78, 93, 97, 100, and 307 each coordinate [4Fe-4S] cluster. The region spanning 79–296 (FNHGTATFMI…GVIAKEIGFT (218 aa)) is the Radical SAM core domain.

This sequence belongs to the radical SAM superfamily. Lipoyl synthase family. [4Fe-4S] cluster serves as cofactor.

It localises to the cytoplasm. The enzyme catalyses [[Fe-S] cluster scaffold protein carrying a second [4Fe-4S](2+) cluster] + N(6)-octanoyl-L-lysyl-[protein] + 2 oxidized [2Fe-2S]-[ferredoxin] + 2 S-adenosyl-L-methionine + 4 H(+) = [[Fe-S] cluster scaffold protein] + N(6)-[(R)-dihydrolipoyl]-L-lysyl-[protein] + 4 Fe(3+) + 2 hydrogen sulfide + 2 5'-deoxyadenosine + 2 L-methionine + 2 reduced [2Fe-2S]-[ferredoxin]. The protein operates within protein modification; protein lipoylation via endogenous pathway; protein N(6)-(lipoyl)lysine from octanoyl-[acyl-carrier-protein]: step 2/2. Catalyzes the radical-mediated insertion of two sulfur atoms into the C-6 and C-8 positions of the octanoyl moiety bound to the lipoyl domains of lipoate-dependent enzymes, thereby converting the octanoylated domains into lipoylated derivatives. This is Lipoyl synthase from Pseudoalteromonas atlantica (strain T6c / ATCC BAA-1087).